The following is a 1105-amino-acid chain: Tubulin-folding cofactor D (1105 aa).

2 N-linked (GlcNAc...) asparagine glycosylation sites follow: asparagine 122 and asparagine 126. 4 HEAT repeats span residues 308 to 345, 347 to 385, 401 to 446, and 452 to 489; these read IYLE…RLPW, LAEQ…WHGA, SKCL…CYSK, and LQTN…RHAS. N-linked (GlcNAc...) asparagine glycosylation is present at asparagine 373. Residues asparagine 721, asparagine 883, and asparagine 1083 are each glycosylated (N-linked (GlcNAc...) asparagine).

As to quaternary structure, interacts with alp21.

The protein localises to the cytoplasm. It localises to the cytoskeleton. Has a function in the folding of beta-tubulin. Microtubule-associated protein that is essential to direct polarized cell growth and to position the nucleus and septum to the center of the cell during mitosis. This Schizosaccharomyces pombe (strain 972 / ATCC 24843) (Fission yeast) protein is Tubulin-folding cofactor D (alp1).